The chain runs to 721 residues: Glucans biosynthesis glucosyltransferase H (721 aa).

Transmembrane regions (helical) follow at residues 53–75, 85–107, 404–426, 456–478, 490–512, and 567–589; these read VLIMVATAVLSAAGIYEMYQVLQ, VVLVLFAALFAWVALSFVSALAG, GIGAYLTAPMWLAFLIAGILISL, WVFAGTMGLLILPKLLALFLVLI, LRTFGGVLLETMISALTAPVMMV, and WPLLLWMTPVIVGLLLAIPVALL.

This sequence belongs to the glycosyltransferase 2 family. OpgH subfamily.

The protein localises to the cell inner membrane. It functions in the pathway glycan metabolism; osmoregulated periplasmic glucan (OPG) biosynthesis. Its function is as follows. Involved in the biosynthesis of osmoregulated periplasmic glucans (OPGs). This chain is Glucans biosynthesis glucosyltransferase H, found in Rhodopseudomonas palustris (strain ATCC BAA-98 / CGA009).